Reading from the N-terminus, the 283-residue chain is Polyprenyl-phosphate transporter (283 aa).

A run of 9 helical transmembrane segments spans residues 27-47 (GTIALLLGIYNQFIASISGIF), 51-71 (FWPSFTFLIPIIIGMLLAMGS), 85-105 (IPTMFFFGGLIIGIVPYLLKI), 112-132 (FTTKHYMMVIAGIAILIVITL), 148-168 (TSLIIKYFIAGMCASSAMLLP), 169-189 (GISGSFMLLVFGVYGTVMLAI), 197-217 (FAGLPILLAVGFGVLAGFIIS), 230-250 (LMTFALIIGFVVGSLFAVFPG), and 255-275 (IVMWFVSLVVFIIGFIVSLTL).

Belongs to the PopT family.

The protein localises to the cell membrane. With respect to regulation, active in alkaline conditions. In terms of biological role, flippase that catalyzes the transport of undecaprenyl phosphate (UndP) across the cytoplasmic membrane, from the external side to the cytoplasmic side. Is involved in UndP recycling during peptidoglycan synthesis. Necessary for peptidoglycan maintenance. The chain is Polyprenyl-phosphate transporter from Staphylococcus aureus (strain NCTC 8325 / PS 47).